The primary structure comprises 71 residues: UPF0346 protein SSU05_1322 (71 aa).

The protein belongs to the UPF0346 family.

The chain is UPF0346 protein SSU05_1322 from Streptococcus suis (strain 05ZYH33).